Reading from the N-terminus, the 1072-residue chain is Guanylyl cyclase C (1072 aa).

The N-terminal stretch at 1–22 (MTSLLGLAVRLLLFQPTLMFWA) is a signal peptide. Residues 23-429 (SQVRQKCHNG…PNDVPGLGPQ (407 aa)) lie on the Extracellular side of the membrane. Asn31, Asn74, Asn78, Asn187, Asn194, Asn306, and Asn401 each carry an N-linked (GlcNAc...) asparagine glycan. The chain crosses the membrane as a helical span at residues 430–453 (ILMIAVFTLTGIVVVLLLIALLVL). Topologically, residues 454–1072 (RKYRRDHELR…NNSDHDSTYF (619 aa)) are cytoplasmic. Residues 488–748 (LKIDDDRRRD…KIESTLAKIF (261 aa)) enclose the Protein kinase domain. Positions 823–953 (TIYFSDIVGF…DTVNTASRME (131 aa)) constitute a Guanylate cyclase domain.

The protein belongs to the adenylyl cyclase class-4/guanylyl cyclase family. As to quaternary structure, homotrimer. Interacts via its C-terminal region with PDZK2. Interacts with the lectin chaperone VIP36. In terms of processing, glycosylation at Asn-74 and/or Asn-78 is required for interaction with VIP36 while glycosylation at Asn-401 modulates ligand-mediated GC-C activation.

Its subcellular location is the cell membrane. The protein resides in the endoplasmic reticulum membrane. It carries out the reaction GTP = 3',5'-cyclic GMP + diphosphate. Guanylyl cyclase that catalyzes synthesis of cyclic GMP (cGMP) from GTP. Receptor for the E.coli heat-stable enterotoxin; E.coli enterotoxin markedly stimulates the accumulation of cGMP in mammalian cells expressing GUCY2C. In Rattus norvegicus (Rat), this protein is Guanylyl cyclase C (Gucy2c).